Consider the following 258-residue polypeptide: GCN5-related N-acetyltransferase 2, chloroplastic (258 aa).

A chloroplast-targeting transit peptide spans 1–58 (MLLIPISSSSSSSISPPPNSYPSNHHSLFFSNLTFPIQHGSRKLKTLRLRANFWESIR). The tract at residues 107–194 (IIFSSGGEID…DHAFNATIWD (88 aa)) is interaction with begomoviruses NSP protein. Residues 107–258 (IIFSSGGEID…GIKGMFWYPK (152 aa)) form the N-acetyltransferase domain. Residues 195–197 (VLV), 203–208 (GQGLGK), 231–233 (DSQ), and Y238 contribute to the acetyl-CoA site. Y238 functions as the Proton donor in the catalytic mechanism.

It belongs to the acetyltransferase family. GNAT subfamily. Oligomer. Interacts with begomoviruses NSP but not with CP. This interaction may allow NSP to recruit NSI monomers to acetylate viral genome-bound CP and thus regulate nuclear export of viral genome by NSP. In terms of processing, S-sulfhydrated and activated by hydrogen sulfide H(2)S to promote melatonin accumulation and subsequent melatonin-dependent stomotal closure to combat osmotic stress. Post-translationally, autoacetylated. In terms of tissue distribution, highly expressed in cauline leaves and seeds, at lower levels in stems, siliques, inflorescences and rosettes leaves and at very low levels in roots. Expressed in the xylem parenchyma and phloem of the leaves and root, and in guard cells of young leaves.

It is found in the plastid. The protein localises to the chloroplast. The enzyme catalyses 5-methoxytryptamine + acetyl-CoA = melatonin + CoA + H(+). It carries out the reaction L-lysyl-[histone] + acetyl-CoA = N(6)-acetyl-L-lysyl-[histone] + CoA + H(+). It catalyses the reaction L-lysyl-[protein] + acetyl-CoA = N(6)-acetyl-L-lysyl-[protein] + CoA + H(+). The catalysed reaction is serotonin + acetyl-CoA = N-acetylserotonin + CoA + H(+). The enzyme catalyses N-terminal L-alanyl-[protein] + acetyl-CoA = N-terminal N(alpha)-acetyl-L-alanyl-[protein] + CoA + H(+). It carries out the reaction N-terminal L-seryl-[protein] + acetyl-CoA = N-terminal N(alpha)-acetyl-L-seryl-[protein] + CoA + H(+). It catalyses the reaction N-terminal L-valyl-[protein] + acetyl-CoA = N-terminal N(alpha)-acetyl-L-valyl-[protein] + CoA + H(+). The catalysed reaction is N-terminal glycyl-[protein] + acetyl-CoA = N-terminal N(alpha)-acetylglycyl-[protein] + CoA + H(+). The enzyme catalyses an N-terminal L-alpha-aminoacyl-[protein] + acetyl-CoA = N-terminal N(alpha)-acetyl-L-alpha-aminoacyl-[protein] + CoA + H(+). It carries out the reaction N-terminal L-threonyl-[protein] + acetyl-CoA = N-terminal N(alpha)-acetyl-L-threonyl-[protein] + CoA + H(+). It catalyses the reaction N-terminal L-methionyl-[protein] + acetyl-CoA = N-terminal N(alpha)-acetyl-L-methionyl-[protein] + CoA + H(+). The catalysed reaction is N-terminal L-leucyl-[protein] + acetyl-CoA = N-terminal N(alpha)-acetyl-L-leucyl-[protein] + CoA + H(+). With respect to regulation, inhibited by the viral nuclear shuttle protein (NSP) that binds to the region required for oligomerization. Protein acetyltransferase with dual specificity triggering both N-alpha-acetylation (NTA), with a preference for alanine, serine, threonine, methionine and to a lower extent valine as substrates (can also use glycine and leucine), and epsilon-lysine acetylation (KA) of several plastid proteins. Triggers lysine acetylation in KEA1 and KEA2. Acetylates in vitro histones H2A and H3. Does not act as a transcriptional activator but required for the dynamic reorganization of thylakoid protein complexes and grana during photosynthetic state transitions. Involved in melatonin biosynthesis by catalyzing the formation of N-acetylserotonin (NAS) from serotonin and of melatonin (N-acetyl-5-methoxytryptamine) from 5-methoxytryptamine (5-MT). By triggering melatonin biosynthesis, contributes to the chloroplast protein quality control (CPQC), which plays a pivotal role in starch synthesis, and confers melatonin-associated tolerance to high light (HL) stress. Prevents the accumulation of oil and anthocyanin content in mature seeds and avoids seed germination in a melatonin-dependent manner, but promotes mucilage production in the seed coat. Contributes to melatonin-mediated anthocyanin production in cold-exposed seedlings. Implicated in melatonin-monitored circadian dynamics of stomatal aperture to minimize night water loss and promote drought tolerance, partly by triggering hydrogen sulfide H(2)S-dependent stomotal closure in response to osmotic stress. In terms of biological role, (Microbial infection) Required for begomovirus infection and systemic spread. In case of begomoviruses infection, acetylates the capsid protein (CP), but not the nuclear shuttle protein (NSP). Stimulates melatonin-triggered defense responses to the necrotrophic Botrytis cinerea. The sequence is that of GCN5-related N-acetyltransferase 2, chloroplastic from Arabidopsis thaliana (Mouse-ear cress).